The primary structure comprises 340 residues: Phosphoribosylformylglycinamidine cyclo-ligase (340 aa).

This sequence belongs to the AIR synthase family.

The protein resides in the cytoplasm. It carries out the reaction 2-formamido-N(1)-(5-O-phospho-beta-D-ribosyl)acetamidine + ATP = 5-amino-1-(5-phospho-beta-D-ribosyl)imidazole + ADP + phosphate + H(+). It participates in purine metabolism; IMP biosynthesis via de novo pathway; 5-amino-1-(5-phospho-D-ribosyl)imidazole from N(2)-formyl-N(1)-(5-phospho-D-ribosyl)glycinamide: step 2/2. The polypeptide is Phosphoribosylformylglycinamidine cyclo-ligase (Streptococcus uberis (strain ATCC BAA-854 / 0140J)).